Consider the following 393-residue polypeptide: Digeranylgeranylglycerophospholipid reductase (393 aa).

Residues Ala-14, Asp-33, Cys-44, Ala-45, Gly-47, Arg-100, Ala-124, Asp-280, Gly-292, and Ile-293 each contribute to the FAD site.

Belongs to the geranylgeranyl reductase family. DGGGPL reductase subfamily. It depends on FAD as a cofactor.

The catalysed reaction is a 2,3-bis-O-phytanyl-sn-glycerol 1-phospholipid + 8 A = a 2,3-bis-O-(geranylgeranyl)-sn-glycerol 1-phospholipid + 8 AH2. The enzyme catalyses 2,3-bis-O-(phytanyl)-sn-glycerol 1-phosphate + 8 A = 2,3-bis-O-(geranylgeranyl)-sn-glycerol 1-phosphate + 8 AH2. It catalyses the reaction CDP-2,3-bis-O-(geranylgeranyl)-sn-glycerol + 8 AH2 = CDP-2,3-bis-O-(phytanyl)-sn-glycerol + 8 A. It carries out the reaction archaetidylserine + 8 AH2 = 2,3-bis-O-phytanyl-sn-glycero-3-phospho-L-serine + 8 A. It participates in membrane lipid metabolism; glycerophospholipid metabolism. In terms of biological role, is involved in the reduction of 2,3-digeranylgeranylglycerophospholipids (unsaturated archaeols) into 2,3-diphytanylglycerophospholipids (saturated archaeols) in the biosynthesis of archaeal membrane lipids. Catalyzes the formation of archaetidic acid (2,3-di-O-phytanyl-sn-glyceryl phosphate) from 2,3-di-O-geranylgeranylglyceryl phosphate (DGGGP) via the hydrogenation of each double bond of the isoprenoid chains. Is also probably able to reduce double bonds of geranyl groups in CDP-2,3-bis-O-(geranylgeranyl)-sn-glycerol and archaetidylserine, thus acting at various stages in the biosynthesis of archaeal membrane lipids. This is Digeranylgeranylglycerophospholipid reductase from Methanobrevibacter smithii (strain ATCC 35061 / DSM 861 / OCM 144 / PS).